The sequence spans 191 residues: Protein HP-20 homolog (191 aa).

Positions 1–16 (MADLRILVSIILMTNA) are cleaved as a signal peptide. The 37-residue stretch at 22–58 (GCTGPPGPPGHPGPPGIRGPPGIRGIPGLPGPPGTPG) folds into the Collagen-like domain. The segment at 22-61 (GCTGPPGPPGHPGPPGIRGPPGIRGIPGLPGPPGTPGPSV) is disordered. Positions 26–39 (PPGPPGHPGPPGIR) are enriched in pro residues. In terms of domain architecture, C1q spans 64–191 (PCHRQSAFTV…VTIYFSGFLT (128 aa)).

The protein localises to the secreted. The chain is Protein HP-20 homolog from Bos taurus (Bovine).